A 593-amino-acid chain; its full sequence is Monoterpene synthase 7, chloroplastic (593 aa).

Residues 1–39 (MSVSLSFAASATFGFRGGLGGFSRPAAAIKQWRCLPRIQ) constitute a chloroplast transit peptide. The Mg(2+) site is built by Asp-348, Asp-352, Asp-491, and Glu-499. Residues 348–352 (DDVYD) carry the DDXXD motif motif.

The protein belongs to the terpene synthase family. Tpsa subfamily. It depends on Mg(2+) as a cofactor. Mn(2+) is required as a cofactor. In terms of tissue distribution, highly expressed in flowers, petals and sepals, but almost undetectable in vegetative organs.

Its subcellular location is the plastid. The protein localises to the chloroplast. It carries out the reaction (2E)-geranyl diphosphate = sabinene + diphosphate. The catalysed reaction is (2E)-geranyl diphosphate = terpinolene + diphosphate. The enzyme catalyses (2E)-geranyl diphosphate = alpha-pinene + diphosphate. It catalyses the reaction (2E)-geranyl diphosphate = beta-pinene + diphosphate. It carries out the reaction (2E)-geranyl diphosphate = beta-myrcene + diphosphate. The catalysed reaction is (2E)-geranyl diphosphate = alpha-terpinene + diphosphate. The enzyme catalyses (2E)-geranyl diphosphate = beta-phellandrene + diphosphate. It catalyses the reaction (2E)-geranyl diphosphate = gamma-terpinene + diphosphate. It participates in secondary metabolite biosynthesis; terpenoid biosynthesis. In terms of biological role, monoterpene synthase involved in the biosynthesis of volatile compounds present in floral scent. Mediates the conversion of (2E)-geranyl diphosphate (GPP) into sabinene and sub-products such as alpha-thujene, alpha-pinene, beta-pinene, myrcene, alpha-phellandrene, alpha-terpinene, beta-phellandrene, gamma-terpinene and terpinolene. Unable to use farnesyl diphosphate (FPP) as substrate. This chain is Monoterpene synthase 7, chloroplastic, found in Hedychium coronarium (White butterfly ginger-lily).